The primary structure comprises 384 residues: 8-amino-7-oxononanoate synthase (384 aa).

Residue Arg-23 coordinates substrate. A pyridoxal 5'-phosphate-binding site is contributed by Gly-110–Phe-111. His-135 provides a ligand contact to substrate. 3 residues coordinate pyridoxal 5'-phosphate: Ser-179, His-206, and Thr-232. Lys-235 is subject to N6-(pyridoxal phosphate)lysine. A substrate-binding site is contributed by Thr-348.

The protein belongs to the class-II pyridoxal-phosphate-dependent aminotransferase family. BioF subfamily. Homodimer. The cofactor is pyridoxal 5'-phosphate.

The catalysed reaction is 6-carboxyhexanoyl-[ACP] + L-alanine + H(+) = (8S)-8-amino-7-oxononanoate + holo-[ACP] + CO2. It participates in cofactor biosynthesis; biotin biosynthesis. Functionally, catalyzes the decarboxylative condensation of pimeloyl-[acyl-carrier protein] and L-alanine to produce 8-amino-7-oxononanoate (AON), [acyl-carrier protein], and carbon dioxide. In Vibrio cholerae serotype O1 (strain ATCC 39315 / El Tor Inaba N16961), this protein is 8-amino-7-oxononanoate synthase.